A 103-amino-acid chain; its full sequence is NADH-quinone oxidoreductase subunit K 2 (103 aa).

3 helical membrane-spanning segments follow: residues 7–27, 31–51, and 63–83; these read LAWY…GFMI, IITI…TFVA, and IFVF…LGII.

Belongs to the complex I subunit 4L family. As to quaternary structure, NDH-1 is composed of 14 different subunits. Subunits NuoA, H, J, K, L, M, N constitute the membrane sector of the complex.

The protein localises to the cell inner membrane. The catalysed reaction is a quinone + NADH + 5 H(+)(in) = a quinol + NAD(+) + 4 H(+)(out). Its function is as follows. NDH-1 shuttles electrons from NADH, via FMN and iron-sulfur (Fe-S) centers, to quinones in the respiratory chain. The immediate electron acceptor for the enzyme in this species is believed to be ubiquinone. Couples the redox reaction to proton translocation (for every two electrons transferred, four hydrogen ions are translocated across the cytoplasmic membrane), and thus conserves the redox energy in a proton gradient. This chain is NADH-quinone oxidoreductase subunit K 2, found in Koribacter versatilis (strain Ellin345).